We begin with the raw amino-acid sequence, 131 residues long: Profilin-3 (131 aa).

C13 and C115 form a disulfide bridge. The Involved in PIP2 interaction motif lies at 81 to 97 (AVIRGKKGAGGITIKKT). T111 is subject to Phosphothreonine.

Belongs to the profilin family. In terms of assembly, occurs in many kinds of cells as a complex with monomeric actin in a 1:1 ratio. Post-translationally, phosphorylated by MAP kinases.

It localises to the cytoplasm. The protein resides in the cytoskeleton. Functionally, binds to actin and affects the structure of the cytoskeleton. At high concentrations, profilin prevents the polymerization of actin, whereas it enhances it at low concentrations. The sequence is that of Profilin-3 from Olea europaea (Common olive).